The primary structure comprises 154 residues: Regulatory protein RecX (154 aa).

This sequence belongs to the RecX family.

The protein resides in the cytoplasm. Modulates RecA activity. The sequence is that of Regulatory protein RecX from Trichlorobacter lovleyi (strain ATCC BAA-1151 / DSM 17278 / SZ) (Geobacter lovleyi).